The sequence spans 131 residues: Peptide methionine sulfoxide reductase MsrB (131 aa).

Residues 8–130 enclose the MsrB domain; sequence LEEWKQMLDP…NSVCLDLVPR (123 aa). Zn(2+)-binding residues include Cys47, Cys50, Cys96, and Cys99. Residue Cys119 is the Nucleophile of the active site.

Belongs to the MsrB Met sulfoxide reductase family. Requires Zn(2+) as cofactor.

The catalysed reaction is L-methionyl-[protein] + [thioredoxin]-disulfide + H2O = L-methionyl-(R)-S-oxide-[protein] + [thioredoxin]-dithiol. This is Peptide methionine sulfoxide reductase MsrB from Pseudomonas syringae pv. syringae (strain B728a).